Reading from the N-terminus, the 190-residue chain is Elongation factor P 1 (190 aa).

Belongs to the elongation factor P family.

The protein localises to the cytoplasm. Its pathway is protein biosynthesis; polypeptide chain elongation. Involved in peptide bond synthesis. Stimulates efficient translation and peptide-bond synthesis on native or reconstituted 70S ribosomes in vitro. Probably functions indirectly by altering the affinity of the ribosome for aminoacyl-tRNA, thus increasing their reactivity as acceptors for peptidyl transferase. This is Elongation factor P 1 (efp1) from Lactobacillus johnsonii (strain CNCM I-12250 / La1 / NCC 533).